The chain runs to 868 residues: Probable inorganic carbon transporter subunit DabA (868 aa).

Zn(2+)-binding residues include Cys-392, Asp-394, His-574, and Cys-589.

Belongs to the inorganic carbon transporter (TC 9.A.2) DabA family. As to quaternary structure, forms a complex with DabB. The cofactor is Zn(2+).

Its subcellular location is the cell membrane. In terms of biological role, part of an energy-coupled inorganic carbon pump. This Bacillus cereus (strain B4264) protein is Probable inorganic carbon transporter subunit DabA.